Here is a 184-residue protein sequence, read N- to C-terminus: Acireductone dioxygenase (184 aa).

Positions 87, 89, 93, and 137 each coordinate Fe(2+). Ni(2+)-binding residues include His-87, His-89, Glu-93, and His-137.

It belongs to the acireductone dioxygenase (ARD) family. Fe(2+) is required as a cofactor. It depends on Ni(2+) as a cofactor.

It localises to the cytoplasm. The protein localises to the nucleus. The enzyme catalyses 1,2-dihydroxy-5-(methylsulfanyl)pent-1-en-3-one + O2 = 4-methylsulfanyl-2-oxobutanoate + formate + 2 H(+). The catalysed reaction is 1,2-dihydroxy-5-(methylsulfanyl)pent-1-en-3-one + O2 = 3-(methylsulfanyl)propanoate + CO + formate + 2 H(+). The protein operates within amino-acid biosynthesis; L-methionine biosynthesis via salvage pathway; L-methionine from S-methyl-5-thio-alpha-D-ribose 1-phosphate: step 5/6. Functionally, catalyzes 2 different reactions between oxygen and the acireductone 1,2-dihydroxy-3-keto-5-methylthiopentene (DHK-MTPene) depending upon the metal bound in the active site. Fe-containing acireductone dioxygenase (Fe-ARD) produces formate and 2-keto-4-methylthiobutyrate (KMTB), the alpha-ketoacid precursor of methionine in the methionine recycle pathway. Ni-containing acireductone dioxygenase (Ni-ARD) produces methylthiopropionate, carbon monoxide and formate, and does not lie on the methionine recycle pathway. This Ciona intestinalis (Transparent sea squirt) protein is Acireductone dioxygenase.